Here is a 360-residue protein sequence, read N- to C-terminus: DNA replication and repair protein RecF (360 aa).

33–40 provides a ligand contact to ATP; it reads GENGSGKT.

This sequence belongs to the RecF family.

Its subcellular location is the cytoplasm. Its function is as follows. The RecF protein is involved in DNA metabolism; it is required for DNA replication and normal SOS inducibility. RecF binds preferentially to single-stranded, linear DNA. It also seems to bind ATP. This is DNA replication and repair protein RecF from Rickettsia rickettsii (strain Iowa).